Consider the following 397-residue polypeptide: Acetate kinase (397 aa).

N7 contacts Mg(2+). K14 contacts ATP. A substrate-binding site is contributed by R90. D147 functions as the Proton donor/acceptor in the catalytic mechanism. ATP contacts are provided by residues 207 to 211, 282 to 284, and 330 to 334; these read HLGNG, DFR, and GIGEN. Residue E384 participates in Mg(2+) binding.

Belongs to the acetokinase family. As to quaternary structure, homodimer. Mg(2+) serves as cofactor. It depends on Mn(2+) as a cofactor.

The protein resides in the cytoplasm. The catalysed reaction is acetate + ATP = acetyl phosphate + ADP. It participates in metabolic intermediate biosynthesis; acetyl-CoA biosynthesis; acetyl-CoA from acetate: step 1/2. In terms of biological role, catalyzes the formation of acetyl phosphate from acetate and ATP. Can also catalyze the reverse reaction. The polypeptide is Acetate kinase (Agathobacter rectalis (strain ATCC 33656 / DSM 3377 / JCM 17463 / KCTC 5835 / VPI 0990) (Eubacterium rectale)).